A 186-amino-acid chain; its full sequence is Single-stranded DNA-binding protein 1 (186 aa).

An SSB domain is found at 1–108 (MDATVTVVGN…LEIDEIGPTL (108 aa)). The interval 120–186 (QAGHGVSPDP…EDFDSDEVPF (67 aa)) is disordered. Polar residues predominate over residues 132 to 141 (DSQTGQGIDS). Acidic residues predominate over residues 175–186 (SYEDFDSDEVPF).

Homotetramer.

The polypeptide is Single-stranded DNA-binding protein 1 (ssb1) (Tropheryma whipplei (strain TW08/27) (Whipple's bacillus)).